The following is a 208-amino-acid chain: Putative dioxygenase RF_0617 (208 aa).

The protein belongs to the intradiol ring-cleavage dioxygenase family.

In Rickettsia felis (strain ATCC VR-1525 / URRWXCal2) (Rickettsia azadi), this protein is Putative dioxygenase RF_0617.